A 324-amino-acid polypeptide reads, in one-letter code: Polyketide biosynthesis acyltransferase homolog PksD (324 aa).

Serine 99 is a catalytic residue.

The protein localises to the cytoplasm. Its pathway is antibiotic biosynthesis; bacillaene biosynthesis. Its function is as follows. Probably involved in some intermediate steps for the synthesis of the antibiotic polyketide bacillaene which is involved in secondary metabolism. The sequence is that of Polyketide biosynthesis acyltransferase homolog PksD (pksD) from Bacillus subtilis (strain 168).